Consider the following 288-residue polypeptide: Phytanoyl-CoA dioxygenase domain-containing protein 1 homolog (288 aa).

Residues K95, M134, 149–151 (HVD), and W167 each bind 2-oxoglutarate. Fe cation-binding residues include H149 and D151. H242 serves as a coordination point for Fe cation. S244 and R253 together coordinate 2-oxoglutarate.

The protein belongs to the PhyH family. PHYHD1 subfamily. Fe cation serves as cofactor.

Functionally, has alpha-ketoglutarate-dependent dioxygenase activity. Does not show detectable activity towards fatty acid CoA thioesters. Is not expected to be active with phytanoyl CoA. The polypeptide is Phytanoyl-CoA dioxygenase domain-containing protein 1 homolog (Caenorhabditis elegans).